Reading from the N-terminus, the 685-residue chain is Bifunctional lycopene cyclase/phytoene synthase (685 aa).

The tract at residues 15–255 is lycopene beta-cyclase; sequence TLSYRHFHLL…LVSACFTFDR (241 aa). 7 helical membrane-spanning segments follow: residues 21 to 41, 48 to 68, 92 to 114, 129 to 149, 156 to 176, 187 to 207, and 231 to 251; these read FHLLWTLPLCAVLFLVARPFL, KLILLPIIAFVWTTPWDNLIV, YFFFVIQSLISTLWCTLLTRWAL, LATPAVVVCMLCFVLGLKAAV, YFGMITWWSSLPLALLLWGSV, GLAPFALSVLAPTFYLWASDV, and LPIEEMLFFLVTNLILVSACF. A phytoene synthase region spans residues 262-685; that stretch reads QSVAENAPPL…RAVSAVYFGV (424 aa).

The protein in the N-terminal section; belongs to the lycopene beta-cyclase family. This sequence in the C-terminal section; belongs to the phytoene/squalene synthase family.

Its subcellular location is the membrane. It carries out the reaction all-trans-lycopene = gamma-carotene. The catalysed reaction is gamma-carotene = all-trans-beta-carotene. The enzyme catalyses 2 (2E,6E,10E)-geranylgeranyl diphosphate = 15-cis-phytoene + 2 diphosphate. Its pathway is carotenoid biosynthesis; beta-carotene biosynthesis. It functions in the pathway carotenoid biosynthesis; phytoene biosynthesis; all-trans-phytoene from geranylgeranyl diphosphate: step 1/1. Its function is as follows. Bifunctional enzyme that catalyzes the reactions from geranylgeranyl diphosphate to phytoene (phytoene synthase) and lycopene to beta-carotene via the intermediate gamma-carotene (lycopene cyclase). The polypeptide is Bifunctional lycopene cyclase/phytoene synthase (Sporisorium reilianum (strain SRZ2) (Maize head smut fungus)).